A 108-amino-acid chain; its full sequence is MKVKIVTPYGIVYDRESDFISFRTVEGSMGILPRRAPIVTQLSVCDVKIKSGDDEYHLKVAGGFLLCDGKDVIIITEEAGREEDISPDRFMEARERVERVRRFFQSSL.

Belongs to the ATPase epsilon chain family. As to quaternary structure, F-type ATPases have 2 components, CF(1) - the catalytic core - and CF(0) - the membrane proton channel. CF(1) has five subunits: alpha(3), beta(3), gamma(1), delta(1), epsilon(1). CF(0) has three main subunits: a, b and c.

Its subcellular location is the cell inner membrane. Its function is as follows. Produces ATP from ADP in the presence of a proton gradient across the membrane. The chain is ATP synthase epsilon chain from Thermotoga maritima (strain ATCC 43589 / DSM 3109 / JCM 10099 / NBRC 100826 / MSB8).